The primary structure comprises 170 residues: S-ribosylhomocysteine lyase (170 aa).

Residues His-54, His-58, and Cys-128 each coordinate Fe cation.

This sequence belongs to the LuxS family. In terms of assembly, homodimer. Fe cation is required as a cofactor.

It carries out the reaction S-(5-deoxy-D-ribos-5-yl)-L-homocysteine = (S)-4,5-dihydroxypentane-2,3-dione + L-homocysteine. In terms of biological role, involved in the synthesis of autoinducer 2 (AI-2) which is secreted by bacteria and is used to communicate both the cell density and the metabolic potential of the environment. The regulation of gene expression in response to changes in cell density is called quorum sensing. Catalyzes the transformation of S-ribosylhomocysteine (RHC) to homocysteine (HC) and 4,5-dihydroxy-2,3-pentadione (DPD). This chain is S-ribosylhomocysteine lyase, found in Marinomonas sp. (strain MWYL1).